A 1432-amino-acid polypeptide reads, in one-letter code: ABC transporter B family member 3 (1432 aa).

2 disordered regions span residues 1-21 (MDDG…EEEI) and 48-149 (ITQP…KTEE). 3 stretches are compositionally biased toward low complexity: residues 52–62 (SNNNNNSNNNN), 76–106 (NNNN…FNNN), and 118–135 (NTNE…NNND). The stretch at 117–163 (ENTNENNNKNNNNNNNNNDDYNDGADERVKTEEEIKKEAENELNQSV) forms a coiled coil. Residues 180-479 (MFLGTIAAVI…ASPCLALFAQ (300 aa)) enclose the ABC transmembrane type-1 1 domain. The next 6 membrane-spanning stretches (helical) occupy residues 185–205 (IAAV…GLVV), 232–252 (LLML…LWMI), 303–323 (KVGR…IGFT), 325–345 (GWQL…GGFF), 410–430 (GLGL…AFWY), and 457–477 (FFAV…LALF). Positions 514–750 (IEFKDVGFHY…QGLYFDLVEK (237 aa)) constitute an ABC transporter 1 domain. Residue 549–556 (GDSGGGKS) participates in ATP binding. Residues 787–819 (KRSLRKNESESNKKDKEDSNNKKKKKSNKKKVE) are disordered. A compositionally biased stretch (basic and acidic residues) spans 791 to 807 (RKNESESNKKDKEDSNN). Residues 837–1157 (WCFGFLSAVG…ASSFAPDLAK (321 aa)) form the ABC transmembrane type-1 2 domain. Transmembrane regions (helical) follow at residues 838–858 (CFGF…AMVF), 882–902 (LMFV…GFLF), 968–988 (MVGG…VIIA), 989–1009 (CFPL…GFSS), 1060–1080 (ISGF…CLSF), and 1134–1154 (VFFA…FAPD). The ABC transporter 2 domain occupies 1192–1428 (IEFKNLHFSY…EGPYSQLWYN (237 aa)). Residue 1227-1234 (GDSGGGKS) participates in ATP binding.

Belongs to the ABC transporter superfamily. ABCB family. Multidrug resistance exporter (TC 3.A.1.201) subfamily.

The protein localises to the membrane. This Dictyostelium discoideum (Social amoeba) protein is ABC transporter B family member 3 (abcB3).